The sequence spans 637 residues: Probable potassium transport system protein Kup (637 aa).

12 helical membrane passes run 25–45 (ISLA…LYAI), 62–82 (VLGV…LKYL), 115–135 (WFLV…GMIT), 149–169 (IIAP…LTGL), 180–200 (VGAL…VLGL), 227–247 (LQGF…EALY), 263–283 (ILFV…LLLF), 295–315 (LVPS…TIIA), 352–372 (IYVP…VIGF), 378–398 (LAAA…ILFY), 410–430 (LATN…FGAS), and 434–454 (LFHG…LMLT).

Belongs to the HAK/KUP transporter (TC 2.A.72) family.

Its subcellular location is the cell inner membrane. It carries out the reaction K(+)(in) + H(+)(in) = K(+)(out) + H(+)(out). In terms of biological role, transport of potassium into the cell. Likely operates as a K(+):H(+) symporter. This Chlorobium phaeobacteroides (strain DSM 266 / SMG 266 / 2430) protein is Probable potassium transport system protein Kup.